The sequence spans 161 residues: Ferredoxin/F(420)H(2)-dependent CoB-CoM heterodisulfide reductase subunit C (161 aa).

2 consecutive 4Fe-4S ferredoxin-type domains span residues 10–40 and 51–82; these read KAEG…LNTR and AAVL…TDAI. Positions 19, 22, 25, 29, 62, 65, 68, and 72 each coordinate [4Fe-4S] cluster.

This sequence belongs to the HdrC family. In terms of assembly, the ferredoxin/F(420)H(2)-dependent CoB-CoM heterodisulfide reductase is composed of three subunits; HdrA2, HdrB2 and HdrC2. It depends on [4Fe-4S] cluster as a cofactor.

The protein localises to the cytoplasm. The catalysed reaction is coenzyme B + coenzyme M + 2 oxidized [2Fe-2S]-[ferredoxin] = coenzyme M-coenzyme B heterodisulfide + 2 reduced [2Fe-2S]-[ferredoxin] + 2 H(+). The enzyme catalyses coenzyme B + 2 oxidized coenzyme F420-(gamma-L-Glu)(n) + coenzyme M + 2 reduced [2Fe-2S]-[ferredoxin] + 4 H(+) = coenzyme M-coenzyme B heterodisulfide + 2 reduced coenzyme F420-(gamma-L-Glu)(n) + 2 oxidized [2Fe-2S]-[ferredoxin]. Its pathway is cofactor metabolism; coenzyme M-coenzyme B heterodisulfide reduction; coenzyme B and coenzyme M from coenzyme M-coenzyme B heterodisulfide: step 1/1. In terms of biological role, part of a complex that catalyzes the reversible reduction of CoM-S-S-CoB to the thiol-coenzymes H-S-CoM (coenzyme M) and H-S-CoB (coenzyme B). Catalyzes the transfer of electrons from ferredoxin to CoM-S-S-CoB during methanogenesis from acetate. Electrons transfer from ferredoxin to CoM-S-S-CoB via HdrA2, HdrC2 and HdrB2. In addition, the complex can use electron bifurcation to direct electron pairs from reduced coenzyme F420 towards the reduction of both ferredoxin and CoB-CoM heterodisulfide. This activity may take place during Fe(III)-dependent anaerobic methane oxidation. The sequence is that of Ferredoxin/F(420)H(2)-dependent CoB-CoM heterodisulfide reductase subunit C from Methanosarcina acetivorans (strain ATCC 35395 / DSM 2834 / JCM 12185 / C2A).